The following is a 137-amino-acid chain: Large ribosomal subunit protein uL16 (137 aa).

The span at 1–17 shows a compositional bias: basic residues; sequence MLQPKRTKFRKQQKGRN. The disordered stretch occupies residues 1–24; the sequence is MLQPKRTKFRKQQKGRNRGLAQSG.

Belongs to the universal ribosomal protein uL16 family. As to quaternary structure, part of the 50S ribosomal subunit.

In terms of biological role, binds 23S rRNA and is also seen to make contacts with the A and possibly P site tRNAs. In Dichelobacter nodosus (strain VCS1703A), this protein is Large ribosomal subunit protein uL16.